The chain runs to 111 residues: uncharacterized protein (111 aa).

The interval M1–V26 is disordered.

This is an uncharacterized protein from Caenorhabditis elegans.